The sequence spans 148 residues: Antitoxin Xre (148 aa).

Belongs to the MbcA/ParS/Xre antitoxin family. Homodimer. Forms a complex with cognate toxin Rse.

In terms of biological role, antitoxin component of a type II toxin-antitoxin (TA) system. Neutralizes the activity of cognate toxin Res. The chain is Antitoxin Xre from Yersinia enterocolitica serotype O:8 / biotype 1B (strain NCTC 13174 / 8081).